A 100-amino-acid polypeptide reads, in one-letter code: MSKIWKFTSFATISSVAAASLYLYAIDKNGYYYEKSKFKQVTDRVRKLIDGDETFKYVTIDDFVSGPTQIQTRSRGETFKDLWNAEVRRTAQWIYSLGGR.

The helical transmembrane segment at 10 to 26 (FATISSVAAASLYLYAI) threads the bilayer.

The protein belongs to the MICOS complex subunit Mic12 family. In terms of assembly, component of the mitochondrial contact site and cristae organizing system (MICOS) complex.

The protein resides in the mitochondrion inner membrane. Component of the MICOS complex, a large protein complex of the mitochondrial inner membrane that plays crucial roles in the maintenance of crista junctions, inner membrane architecture, and formation of contact sites to the outer membrane. This Vanderwaltozyma polyspora (strain ATCC 22028 / DSM 70294 / BCRC 21397 / CBS 2163 / NBRC 10782 / NRRL Y-8283 / UCD 57-17) (Kluyveromyces polysporus) protein is MICOS complex subunit MIC12 (AIM5).